The following is a 312-amino-acid chain: 2-aminophenol 1,6-dioxygenase subunit beta (312 aa).

His13, His62, and Glu251 together coordinate Fe cation.

It belongs to the LigB/MhpB extradiol dioxygenase family. The APD complex is a heterotetramer of 2 alpha (CnbCa) and 2 beta (CnbCb) subunits. Fe(2+) is required as a cofactor.

The catalysed reaction is 2-aminophenol + O2 = 2-aminomuconate 6-semialdehyde. It carries out the reaction 2-amino-5-chlorophenol + O2 = 2-amino-5-chloromuconate 6-semialdehyde. It participates in xenobiotic degradation; nitrobenzene degradation. Its pathway is xenobiotic degradation; 4-chloronitrobenzene degradation. Its activity is regulated as follows. Complete loss of activity in the presence of Ni(2+), Co(2+), Cd(2+), Zn(2+) and hydrogen peroxide, however activity with hydrogen peroxide partially restored upon addition of excess ascorbate. Partially inhibited by Fe(2+), Mg(2+), Ca(2+), Mn(2+), Cu(2+) and also by EDTA, at 2 mM concentration. Total activity inhibited in the presence of catechol or 4-nitrocatechol but completely restored after removal of catechol and addition of 2 mM Fe(2+) and 5 mM ascorbate. In terms of biological role, component of the 2-aminophenol 1,6-dioxygenase (APD) complex that catalyzes the ring fission of 2-aminophenol to produce 2-aminomuconic semialdehyde. CnbCb seems to be the catalytic subunit of the complex. Also active on other substrates such as 2-amino-5-chlorophenol (68% activity), protocatechuate (33% activity) and catechol (5% activity). Both 2-aminophenol and 2-amino-5-cholorophenol are likely native substrates for this dioxygenase which is involved in the reductive degradation pathway of both nitrobenzene (NB) and 4-chloronitrobenzene (4-CNB), allowing C.testosteroni strain CNB-1 to grow on these compounds as sole source of carbon, nitrogen, and energy. The protein is 2-aminophenol 1,6-dioxygenase subunit beta of Comamonas testosteroni (Pseudomonas testosteroni).